The chain runs to 970 residues: Serine/threonine-protein kinase PLK4 (970 aa).

Residues 12–265 (FKVGNLLGKG…LSSVLDHPFM (254 aa)) form the Protein kinase domain. Residues 18 to 26 (LGKGSFAGV) and Lys-41 each bind ATP. N6-acetyllysine occurs at positions 45 and 46. Residue Asp-136 is the Proton acceptor of the active site. The tract at residues 324-373 (VFPKNKSSSDFSSSGDGNSFYTQWGNQETSNSGRGRVIQDAEERPHSRYL) is disordered. Residues 327–343 (KNKSSSDFSSSGDGNSF) are compositionally biased toward low complexity. The span at 344 to 356 (YTQWGNQETSNSG) shows a compositional bias: polar residues. The span at 360-369 (VIQDAEERPH) shows a compositional bias: basic and acidic residues. At Ser-401 the chain carries Phosphoserine. The tract at residues 498–540 (ISPTRDFQGHPDLQKDTSKNAWTDTKVKKNSDASDNAHSVKQP) is disordered. The span at 504–515 (FQGHPDLQKDTS) shows a compositional bias: basic and acidic residues. The span at 530 to 540 (ASDNAHSVKQP) shows a compositional bias: polar residues. Residues 586–699 (TLRSITSPLV…SRFVQLVRSK (114 aa)) enclose the Cryptic POLO box 1 (CPB1) domain. Ser-665 is modified (phosphoserine). The 114-residue stretch at 700–813 (SPKITYFTRY…GRKPGSTSSP (114 aa)) folds into the Cryptic POLO box 2 (CPB2) domain. Positions 808 to 829 (GSTSSPKALSPPPSVDSNYPTR) are disordered. A Phosphoserine modification is found at Ser-817. Residues 886-964 (QLLKSVFVKN…LSSILLMFSN (79 aa)) enclose the POLO box domain.

Belongs to the protein kinase superfamily. Ser/Thr protein kinase family. CDC5/Polo subfamily. In terms of assembly, homodimer. Interacts with CEP152 (via N-terminus). Interacts with CEP78; this interaction may be important for proper PLK4 localization to the centriole and PLK4-induced overduplication of centrioles. Interacts with CEP131. Interacts simultaneously with TENT5C and CEP192. Interacts with TENT5C; this interaction leads to the TENT5C recruitment in the centrosome. Interacts with CEP85; this interaction may be important in cell migration and centriole assembly. Ubiquitinated; leading to its degradation by the proteasome. Deubiquitinated by USP54; leading to PLK4 stabilization. In terms of processing, tyrosine-phosphorylated by TEC. Post-translationally, acetylation by KAT2A and KAT2B impairs kinase activity by shifting the kinase to an inactive conformation.

It is found in the cytoplasm. The protein resides in the cytoskeleton. The protein localises to the microtubule organizing center. It localises to the centrosome. Its subcellular location is the centriole. It is found in the nucleus. The protein resides in the nucleolus. The protein localises to the cleavage furrow. The enzyme catalyses L-seryl-[protein] + ATP = O-phospho-L-seryl-[protein] + ADP + H(+). The catalysed reaction is L-threonyl-[protein] + ATP = O-phospho-L-threonyl-[protein] + ADP + H(+). Serine/threonine-protein kinase that plays a central role in centriole duplication. Able to trigger procentriole formation on the surface of the parental centriole cylinder, leading to the recruitment of centriole biogenesis proteins such as SASS6, CPAP, CCP110, CEP135 and gamma-tubulin. When overexpressed, it is able to induce centrosome amplification through the simultaneous generation of multiple procentrioles adjoining each parental centriole during S phase. Phosphorylates 'Ser-151' of FBXW5 during the G1/S transition, leading to inhibit FBXW5 ability to ubiquitinate SASS6. Its central role in centriole replication suggests a possible role in tumorigenesis, centrosome aberrations being frequently observed in tumors. Also involved in deuterosome-mediated centriole amplification in multiciliated that can generate more than 100 centrioles. Also involved in trophoblast differentiation by phosphorylating HAND1, leading to disrupt the interaction between HAND1 and MDFIC and activate HAND1. Phosphorylates CDC25C and CHEK2. Required for the recruitment of STIL to the centriole and for STIL-mediated centriole amplification. Phosphorylates CEP131 and PCM1 which is essential for proper organization and integrity of centriolar satellites. In Pongo abelii (Sumatran orangutan), this protein is Serine/threonine-protein kinase PLK4.